The sequence spans 408 residues: Na(+)-translocating NADH-quinone reductase subunit F (408 aa).

A helical transmembrane segment spans residues Val4 to Phe24. The 2Fe-2S ferredoxin-type domain maps to Gly33 to Ile127. The [2Fe-2S] cluster site is built by Cys70, Cys76, Cys79, and Cys111. The 141-residue stretch at Ile130–Lys270 folds into the FAD-binding FR-type domain.

The protein belongs to the NqrF family. As to quaternary structure, composed of six subunits; NqrA, NqrB, NqrC, NqrD, NqrE and NqrF. It depends on [2Fe-2S] cluster as a cofactor. FAD is required as a cofactor.

Its subcellular location is the cell inner membrane. It carries out the reaction a ubiquinone + n Na(+)(in) + NADH + H(+) = a ubiquinol + n Na(+)(out) + NAD(+). Its function is as follows. NQR complex catalyzes the reduction of ubiquinone-1 to ubiquinol by two successive reactions, coupled with the transport of Na(+) ions from the cytoplasm to the periplasm. The first step is catalyzed by NqrF, which accepts electrons from NADH and reduces ubiquinone-1 to ubisemiquinone by a one-electron transfer pathway. The chain is Na(+)-translocating NADH-quinone reductase subunit F from Shewanella denitrificans (strain OS217 / ATCC BAA-1090 / DSM 15013).